Here is a 191-residue protein sequence, read N- to C-terminus: Ferric nitrobindin-like protein (191 aa).

The short motif at 20 to 26 (GDWAGAG) is the GXWXGXG element.

Belongs to the nitrobindin family.

The polypeptide is Ferric nitrobindin-like protein (Streptomyces coelicolor (strain ATCC BAA-471 / A3(2) / M145)).